A 168-amino-acid polypeptide reads, in one-letter code: 2-C-methyl-D-erythritol 2,4-cyclodiphosphate synthase (168 aa).

A divalent metal cation-binding residues include D11 and H13. Residues D11–H13 and H41–S42 contribute to the 4-CDP-2-C-methyl-D-erythritol 2-phosphate site. H49 contacts a divalent metal cation. 4-CDP-2-C-methyl-D-erythritol 2-phosphate is bound by residues D63 to G65, F68 to D72, T139 to E142, F146, and R149.

The protein belongs to the IspF family. Homotrimer. A divalent metal cation is required as a cofactor.

The catalysed reaction is 4-CDP-2-C-methyl-D-erythritol 2-phosphate = 2-C-methyl-D-erythritol 2,4-cyclic diphosphate + CMP. Its pathway is isoprenoid biosynthesis; isopentenyl diphosphate biosynthesis via DXP pathway; isopentenyl diphosphate from 1-deoxy-D-xylulose 5-phosphate: step 4/6. Its function is as follows. Involved in the biosynthesis of isopentenyl diphosphate (IPP) and dimethylallyl diphosphate (DMAPP), two major building blocks of isoprenoid compounds. Catalyzes the conversion of 4-diphosphocytidyl-2-C-methyl-D-erythritol 2-phosphate (CDP-ME2P) to 2-C-methyl-D-erythritol 2,4-cyclodiphosphate (ME-CPP) with a corresponding release of cytidine 5-monophosphate (CMP). The polypeptide is 2-C-methyl-D-erythritol 2,4-cyclodiphosphate synthase (Psychrobacter arcticus (strain DSM 17307 / VKM B-2377 / 273-4)).